A 467-amino-acid polypeptide reads, in one-letter code: Uronate isomerase (467 aa).

Belongs to the metallo-dependent hydrolases superfamily. Uronate isomerase family.

It catalyses the reaction D-glucuronate = D-fructuronate. The catalysed reaction is aldehydo-D-galacturonate = keto-D-tagaturonate. It participates in carbohydrate metabolism; pentose and glucuronate interconversion. The protein is Uronate isomerase of Streptococcus uberis (strain ATCC BAA-854 / 0140J).